The following is a 433-amino-acid chain: Serine--tRNA ligase (433 aa).

An L-serine-binding site is contributed by Thr-235–Glu-237. Arg-266–Glu-268 serves as a coordination point for ATP. Residue Glu-289 coordinates L-serine. Residue Glu-353 to Ser-356 coordinates ATP. Ser-388 contacts L-serine.

This sequence belongs to the class-II aminoacyl-tRNA synthetase family. Type-1 seryl-tRNA synthetase subfamily. As to quaternary structure, homodimer. The tRNA molecule binds across the dimer.

Its subcellular location is the cytoplasm. It carries out the reaction tRNA(Ser) + L-serine + ATP = L-seryl-tRNA(Ser) + AMP + diphosphate + H(+). The enzyme catalyses tRNA(Sec) + L-serine + ATP = L-seryl-tRNA(Sec) + AMP + diphosphate + H(+). Its pathway is aminoacyl-tRNA biosynthesis; selenocysteinyl-tRNA(Sec) biosynthesis; L-seryl-tRNA(Sec) from L-serine and tRNA(Sec): step 1/1. Functionally, catalyzes the attachment of serine to tRNA(Ser). Is also able to aminoacylate tRNA(Sec) with serine, to form the misacylated tRNA L-seryl-tRNA(Sec), which will be further converted into selenocysteinyl-tRNA(Sec). The sequence is that of Serine--tRNA ligase from Burkholderia pseudomallei (strain 668).